The following is a 202-amino-acid chain: Small ribosomal subunit protein uS4c (202 aa).

An S4 RNA-binding domain is found at 90 to 153 (MRLDNIIFRL…KSETIISKNI (64 aa)).

It belongs to the universal ribosomal protein uS4 family. In terms of assembly, part of the 30S ribosomal subunit. Contacts protein S5. The interaction surface between S4 and S5 is involved in control of translational fidelity.

It is found in the plastid. Its subcellular location is the chloroplast. Its function is as follows. One of the primary rRNA binding proteins, it binds directly to 16S rRNA where it nucleates assembly of the body of the 30S subunit. Functionally, with S5 and S12 plays an important role in translational accuracy. This chain is Small ribosomal subunit protein uS4c (rps4), found in Catharomnion ciliatum (Moss).